The chain runs to 445 residues: MAIKIRKLDSTSEGFAAELRAVLAFEASEDDAIERAVAQILADVKARGDAAVLDYTNRFDRLNAASVAALELPQSELEAALEGLEPKRRAALEAAAARVRGYHEKQKIECGSHSWQYTEADGTVLGQKVTPLDRVGLYVPGGKAAYPSSVLMNAIPARVAGVGEIVMVVPTPDGLKNDLVLAAALLGGVDRVFTIGGAQAVAALAYGTQTVPAVDKICGPGNAYVASAKRRVFGTVGIDMIAGPSEILVLCDGTTDPSWVAMDLFSQAEHDELAQSILLCPDEAFIERVEKAIGELLPTMPRQDVIRASLEGRGALVKVRDMAEACRIANDIAPEHLEISALEPHQWGKQIRHAGAIFLGRYTSESLGDYCAGPNHVLPTSRTARFSSPLGVYDFFKRSSLIEVSAEGAHTLGEIASELAYGEGLQAHAKSAEYRMKGAGDRQKG.

NAD(+) is bound by residues Y138, Q199, and N222. Residues S245, Q267, and H270 each contribute to the substrate site. Residues Q267 and H270 each contribute to the Zn(2+) site. Residues E335 and H336 each act as proton acceptor in the active site. Substrate-binding residues include H336, D369, E423, and H428. D369 serves as a coordination point for Zn(2+). H428 is a Zn(2+) binding site.

This sequence belongs to the histidinol dehydrogenase family. Requires Zn(2+) as cofactor.

It carries out the reaction L-histidinol + 2 NAD(+) + H2O = L-histidine + 2 NADH + 3 H(+). Its pathway is amino-acid biosynthesis; L-histidine biosynthesis; L-histidine from 5-phospho-alpha-D-ribose 1-diphosphate: step 9/9. In terms of biological role, catalyzes the sequential NAD-dependent oxidations of L-histidinol to L-histidinaldehyde and then to L-histidine. The chain is Histidinol dehydrogenase from Burkholderia pseudomallei (strain 1710b).